Reading from the N-terminus, the 193-residue chain is Ion-translocating oxidoreductase complex subunit A (193 aa).

6 helical membrane passes run 5-25 (ILLI…FLGL), 39-59 (IGMG…AYLV), 65-85 (IPLE…AVIV), 102-122 (LLGI…VALL), 134-154 (VLYG…FAAL), and 171-191 (SIAL…TGLV).

This sequence belongs to the NqrDE/RnfAE family. In terms of assembly, the complex is composed of six subunits: RnfA, RnfB, RnfC, RnfD, RnfE and RnfG.

Its subcellular location is the cell inner membrane. In terms of biological role, part of a membrane-bound complex that couples electron transfer with translocation of ions across the membrane. The protein is Ion-translocating oxidoreductase complex subunit A of Actinobacillus pleuropneumoniae serotype 5b (strain L20).